Here is a 345-residue protein sequence, read N- to C-terminus: tRNA dimethylallyltransferase (345 aa).

Gly-9–Ser-16 contacts ATP. Residue Thr-11–Ser-16 coordinates substrate. Interaction with substrate tRNA stretches follow at residues Asp-34 to Gln-37 and Gln-195 to Arg-199.

The protein belongs to the IPP transferase family. Monomer. Mg(2+) serves as cofactor.

It carries out the reaction adenosine(37) in tRNA + dimethylallyl diphosphate = N(6)-dimethylallyladenosine(37) in tRNA + diphosphate. Its function is as follows. Catalyzes the transfer of a dimethylallyl group onto the adenine at position 37 in tRNAs that read codons beginning with uridine, leading to the formation of N6-(dimethylallyl)adenosine (i(6)A). The sequence is that of tRNA dimethylallyltransferase from Orientia tsutsugamushi (strain Ikeda) (Rickettsia tsutsugamushi).